A 314-amino-acid chain; its full sequence is Methionyl-tRNA formyltransferase (314 aa).

110–113 (SLLP) contacts (6S)-5,6,7,8-tetrahydrofolate.

Belongs to the Fmt family.

The catalysed reaction is L-methionyl-tRNA(fMet) + (6R)-10-formyltetrahydrofolate = N-formyl-L-methionyl-tRNA(fMet) + (6S)-5,6,7,8-tetrahydrofolate + H(+). Its function is as follows. Attaches a formyl group to the free amino group of methionyl-tRNA(fMet). The formyl group appears to play a dual role in the initiator identity of N-formylmethionyl-tRNA by promoting its recognition by IF2 and preventing the misappropriation of this tRNA by the elongation apparatus. In Dichelobacter nodosus (strain VCS1703A), this protein is Methionyl-tRNA formyltransferase.